The chain runs to 425 residues: Dual-specificity RNA methyltransferase RlmN (425 aa).

Glu136 (proton acceptor) is an active-site residue. Positions 142-381 (GDDRGTLCVS…FTAGYASPVR (240 aa)) constitute a Radical SAM core domain. Cys149 and Cys392 are oxidised to a cystine. The [4Fe-4S] cluster site is built by Cys156, Cys160, and Cys163. S-adenosyl-L-methionine is bound by residues 218–219 (GE), Ser250, 272–274 (SLH), and Asn349. Cys392 functions as the S-methylcysteine intermediate in the catalytic mechanism.

This sequence belongs to the radical SAM superfamily. RlmN family. The cofactor is [4Fe-4S] cluster.

Its subcellular location is the cytoplasm. The enzyme catalyses adenosine(2503) in 23S rRNA + 2 reduced [2Fe-2S]-[ferredoxin] + 2 S-adenosyl-L-methionine = 2-methyladenosine(2503) in 23S rRNA + 5'-deoxyadenosine + L-methionine + 2 oxidized [2Fe-2S]-[ferredoxin] + S-adenosyl-L-homocysteine. The catalysed reaction is adenosine(37) in tRNA + 2 reduced [2Fe-2S]-[ferredoxin] + 2 S-adenosyl-L-methionine = 2-methyladenosine(37) in tRNA + 5'-deoxyadenosine + L-methionine + 2 oxidized [2Fe-2S]-[ferredoxin] + S-adenosyl-L-homocysteine. Specifically methylates position 2 of adenine 2503 in 23S rRNA and position 2 of adenine 37 in tRNAs. m2A2503 modification seems to play a crucial role in the proofreading step occurring at the peptidyl transferase center and thus would serve to optimize ribosomal fidelity. This is Dual-specificity RNA methyltransferase RlmN from Methylorubrum extorquens (strain PA1) (Methylobacterium extorquens).